We begin with the raw amino-acid sequence, 100 residues long: NADH-quinone oxidoreductase subunit K 2 (100 aa).

3 consecutive transmembrane segments (helical) span residues 2-22, 29-49, and 61-81; these read LAIE…TIGV, IVIF…FIAF, and FVFF…ALMI.

Belongs to the complex I subunit 4L family. NDH-1 is composed of 14 different subunits. Subunits NuoA, H, J, K, L, M, N constitute the membrane sector of the complex.

It localises to the cell inner membrane. It catalyses the reaction a quinone + NADH + 5 H(+)(in) = a quinol + NAD(+) + 4 H(+)(out). Its function is as follows. NDH-1 shuttles electrons from NADH, via FMN and iron-sulfur (Fe-S) centers, to quinones in the respiratory chain. The immediate electron acceptor for the enzyme in this species is believed to be ubiquinone. Couples the redox reaction to proton translocation (for every two electrons transferred, four hydrogen ions are translocated across the cytoplasmic membrane), and thus conserves the redox energy in a proton gradient. In Citrifermentans bemidjiense (strain ATCC BAA-1014 / DSM 16622 / JCM 12645 / Bem) (Geobacter bemidjiensis), this protein is NADH-quinone oxidoreductase subunit K 2.